The following is an 805-amino-acid chain: Sucrose synthase (805 aa).

The tract at residues 275-752 (MVFNVVILSP…GLKRIEEKYT (478 aa)) is GT-B glycosyltransferase.

Belongs to the glycosyltransferase 1 family. Plant sucrose synthase subfamily. As to expression, expression is at least 10-fold higher in tubers compared to photosynthetically active tissues.

The enzyme catalyses an NDP-alpha-D-glucose + D-fructose = a ribonucleoside 5'-diphosphate + sucrose + H(+). Its function is as follows. Sucrose-cleaving enzyme that provides UDP-glucose and fructose for various metabolic pathways. This chain is Sucrose synthase, found in Solanum tuberosum (Potato).